We begin with the raw amino-acid sequence, 375 residues long: Alpha-2,8-sialyltransferase 8B (375 aa).

Residues M1–R6 lie on the Cytoplasmic side of the membrane. The chain crosses the membrane as a helical; Signal-anchor for type II membrane protein span at residues S7–A23. Residues D24 to T375 are Lumenal-facing. N60, N72, N89, and N134 each carry an N-linked (GlcNAc...) asparagine glycan. 2 disulfides stabilise this stretch: C157–C307 and C171–C371. N162 and N185 together coordinate CMP-N-acetyl-beta-neuraminate. N-linked (GlcNAc...) asparagine glycosylation is found at N219 and N234. The CMP-N-acetyl-beta-neuraminate site is built by T294, T295, G296, W316, Y329, and H330. Residue H346 is the Proton donor/acceptor of the active site.

Belongs to the glycosyltransferase 29 family. Autopolysialylated. Autopolysialylation is not a prerequisite for the polysialylation acitity, but enhances the polysialylation acitity.

It localises to the golgi apparatus membrane. Its subcellular location is the secreted. It is found in the cell membrane. The enzyme catalyses [N-acetyl-alpha-D-neuraminosyl-(2-&gt;8)](n) + CMP-N-acetyl-beta-neuraminate = [N-acetyl-alpha-D-neuraminosyl-(2-&gt;8)](n+1) + CMP + H(+). The protein operates within protein modification; protein glycosylation. Functionally, catalyzes the transfer of a sialic acid from a CMP-linked sialic acid donor onto a terminal alpha-2,3-, alpha-2,6-, or alpha-2,8-linked sialic acid of an N-linked glycan acceptor through alpha-2,8-linkages. Therefore, participates in polysialic acid synthesis on various sialylated N-acetyllactosaminyl oligosaccharides (alpha-2,3-, alpha-2,6-, or alpha-2,8-linked sialic acid), including NCAM1, NCAM1 N-glycans, FETUB N-glycans, and to a lesser extent sialylparagloboside (SPG) and AHSG, which does not require the initial addition of an alpha 2,8-sialic acid. However, does not exhibit sialic acid-polymerase activity. Catalyzes polysialic acid synthesis in the hippocampal on NCAM1 and supports neurite outgrowth. ST8SIA2-mediated polysialylation influences on oligodendrocyte differentiation and may promote the integrity of myelin and axons. This is Alpha-2,8-sialyltransferase 8B from Mus musculus (Mouse).